Here is a 162-residue protein sequence, read N- to C-terminus: Endoribonuclease YbeY (162 aa).

Zn(2+) is bound by residues His118, His122, and His128.

The protein belongs to the endoribonuclease YbeY family. Zn(2+) is required as a cofactor.

It localises to the cytoplasm. In terms of biological role, single strand-specific metallo-endoribonuclease involved in late-stage 70S ribosome quality control and in maturation of the 3' terminus of the 16S rRNA. In Caulobacter sp. (strain K31), this protein is Endoribonuclease YbeY.